The following is a 233-amino-acid chain: Triosephosphate isomerase (233 aa).

Position 8–10 (Asn8–Lys10) interacts with substrate. The active-site Electrophile is the His91. The active-site Proton acceptor is Glu155. Positions 161 and 192 each coordinate substrate.

The protein belongs to the triosephosphate isomerase family. In terms of assembly, homodimer.

It localises to the cytoplasm. The enzyme catalyses D-glyceraldehyde 3-phosphate = dihydroxyacetone phosphate. Its pathway is carbohydrate biosynthesis; gluconeogenesis. The protein operates within carbohydrate degradation; glycolysis; D-glyceraldehyde 3-phosphate from glycerone phosphate: step 1/1. Involved in the gluconeogenesis. Catalyzes stereospecifically the conversion of dihydroxyacetone phosphate (DHAP) to D-glyceraldehyde-3-phosphate (G3P). This chain is Triosephosphate isomerase, found in Wolbachia sp. subsp. Brugia malayi (strain TRS).